The primary structure comprises 287 residues: 4-hydroxybenzoate octaprenyltransferase (287 aa).

A run of 6 helical transmembrane segments spans residues 41–61, 92–112, 133–153, 160–180, 218–238, and 267–287; these read LPLL…GCAI, VALA…LNAL, FFAI…PMAF, VPML…AYDT, LGIY…WLGW, and NNWL…ATWF.

Belongs to the UbiA prenyltransferase family. Requires Mg(2+) as cofactor.

It is found in the cell inner membrane. The catalysed reaction is all-trans-octaprenyl diphosphate + 4-hydroxybenzoate = 4-hydroxy-3-(all-trans-octaprenyl)benzoate + diphosphate. It participates in cofactor biosynthesis; ubiquinone biosynthesis. Catalyzes the prenylation of para-hydroxybenzoate (PHB) with an all-trans polyprenyl group. Mediates the second step in the final reaction sequence of ubiquinone-8 (UQ-8) biosynthesis, which is the condensation of the polyisoprenoid side chain with PHB, generating the first membrane-bound Q intermediate 3-octaprenyl-4-hydroxybenzoate. The sequence is that of 4-hydroxybenzoate octaprenyltransferase from Paraburkholderia xenovorans (strain LB400).